The chain runs to 169 residues: Disulfide bond formation protein B (169 aa).

The Cytoplasmic segment spans residues 1-14; it reads MSNDTFYLKREKRF. The helical transmembrane segment at 15 to 31 threads the bilayer; sequence LVLLGIICLSLIGGALY. Residues 32 to 49 lie on the Periplasmic side of the membrane; it reads MQIALGEAPCPLCILQRY. A disulfide bridge connects residues cysteine 41 and cysteine 44. Residues 50–64 form a helical membrane-spanning segment; the sequence is ALLFIAIFAFIGAAM. Topologically, residues 65–71 are cytoplasmic; that stretch reads NGRRGVT. A helical transmembrane segment spans residues 72 to 89; sequence VFEALVTLSALCGIAAAG. Topologically, residues 90–144 are periplasmic; sequence RHAWILAHPSDSCGIDILQPIVDGLPLATLFPTGFQVSGFCTTPYPPVLGLSLAQ. An intrachain disulfide couples cysteine 102 to cysteine 130. Residues 145–163 form a helical membrane-spanning segment; sequence WALTAFVLTAILVPACIIR. Over 164 to 169 the chain is Cytoplasmic; it reads NRRKPY.

It belongs to the DsbB family.

Its subcellular location is the cell inner membrane. Required for disulfide bond formation in some periplasmic proteins. Acts by oxidizing the DsbA protein. In Pseudomonas syringae pv. tomato (strain ATCC BAA-871 / DC3000), this protein is Disulfide bond formation protein B.